We begin with the raw amino-acid sequence, 418 residues long: Putative competence-damage inducible protein (418 aa).

It belongs to the CinA family.

In Streptococcus gordonii (strain Challis / ATCC 35105 / BCRC 15272 / CH1 / DL1 / V288), this protein is Putative competence-damage inducible protein.